Reading from the N-terminus, the 342-residue chain is MNILFWGTPDYAVPTLMALHQAGHTIVGVVTQPDRRRGRGKTLVPSAVKAKAIKMGLRVFTPERIKQDETCQQQLAELQPDLSVVVAFGQILPKNVLNQPPLGCWNGHGSLLPRWRGAGPIQWSILEGDPETGVGVMAMEEGLDTGPVLIERNLPIGLLDNGHTLAERMSVLTAELMVEAMPLIESAGQGSEPERRARLKVMNQSDRSGDASYARMLTKQDHQIDWSASALNIHRKVMALYPNAVTLWNDKRLKLLHCEPLIDRLREELPAEVHPLIGRWPTGGHPPGTVLESVKGLGVVVSTSGCPILVRAAQLEGKGRSDGDSLIQQLNAAAEQQFGTFS.

Residue 110 to 113 (SLLP) participates in (6S)-5,6,7,8-tetrahydrofolate binding.

This sequence belongs to the Fmt family.

The enzyme catalyses L-methionyl-tRNA(fMet) + (6R)-10-formyltetrahydrofolate = N-formyl-L-methionyl-tRNA(fMet) + (6S)-5,6,7,8-tetrahydrofolate + H(+). Functionally, attaches a formyl group to the free amino group of methionyl-tRNA(fMet). The formyl group appears to play a dual role in the initiator identity of N-formylmethionyl-tRNA by promoting its recognition by IF2 and preventing the misappropriation of this tRNA by the elongation apparatus. The chain is Methionyl-tRNA formyltransferase from Synechococcus sp. (strain CC9311).